The primary structure comprises 513 residues: Protein CYCLOPS (513 aa).

Residues 327-435 (QIHGGTASGE…ERSRKMAEAK (109 aa)) are disordered. The segment covering 334-347 (SGEPSQSESSAAAP) has biased composition (low complexity). Positions 359 to 381 (PSNSSQTLCDSSWKQVGESTQNR) are enriched in polar residues. The span at 384–396 (GVREQIMDNLKDD) shows a compositional bias: basic and acidic residues. 2 consecutive short sequence motifs (nuclear localization signal) follow at residues 397 to 401 (RKRKR) and 421 to 424 (KKRR). The stretch at 447–513 (MQAVMKRCEN…ERLLSETGKI (67 aa)) forms a coiled coil.

It belongs to the CYCLOPS family.

It is found in the nucleus. In terms of biological role, involved symbiotic signaling. Required for root infection by symbiotic rhizobia, infection thread (IT) formation, and nodule development. Required for symbiosome formation (i.e. the release of the bacteria from the ITs) and subsequent symbiosome development. Involved in arbuscular mycorrhizal (AM) symbiosis. In Pisum sativum (Garden pea), this protein is Protein CYCLOPS.